The sequence spans 417 residues: Echinulin prenyltransferase 1 (417 aa).

Residues Arg90, Lys179, Tyr181, Lys248, Tyr250, Tyr333, Tyr398, and Tyr402 each coordinate dimethylallyl diphosphate.

It belongs to the tryptophan dimethylallyltransferase family.

It catalyses the reaction cyclo(L-tryptophyl-L-alanyl) + dimethylallyl diphosphate = preechinulin + diphosphate. Its pathway is secondary metabolite biosynthesis. It participates in alkaloid biosynthesis. In terms of biological role, prenyltransferase; part of the gene cluster that mediates the biosynthesis of echinulin family alkaloid. The pathway begins with the biosynthesis of the cyclic dipeptide cyclo-L-Trp-L-Ala (cyclo-TA) by the NRPS echPS via condensation of L-alanine and L-tryptophan. The prenyltransferase echPT1 then catalyzes the first prenylation step, a reverse prenylation reaction at C2, to yield preechinulin. Preechinulin is the substrate of the cytochrome P450 monooxygenase echP450 that catalyzes the formation of the double bond between C10 and C11 to produce neoechulin A. The unique prenyltransferase echPT2 functions as a competitive enzyme with echP450 for preechinulin metabolization and uses preechinulin for effective regiospecific prenylations. Preechinulin is prenylated by echPT2 at C5 or C7. C7-prenylation leads to accumulation of tardioxopiperazine B without further modification by echPT2. In contrast, the C5-prenylated tardioxopiperazine A can be prenylated again by echPT2, predominantly at C7 to form echinulin or less frequently at C4 to give variecolorin L. EchPT2 also accepts neoechilunin A to produce varlecolorin G (prenylation at C5) or isoechinulin A (prenylation at C7). EchPT2 further converts isoechinulin A into dehydroechinulin. Moreover, a yet unidentified enzyme can also convert neoechilunin A into neoechilunin B by introducing a double bond between positions C14 and C17 and thus provides a further substrate to echPT2 for C5 and C7 prenylation. This is Echinulin prenyltransferase 1 from Aspergillus ruber (Eurotium rubrum).